We begin with the raw amino-acid sequence, 183 residues long: Apo-citrate lyase phosphoribosyl-dephospho-CoA transferase (183 aa).

This sequence belongs to the CitX family.

The catalysed reaction is apo-[citrate lyase ACP] + 2'-(5''-triphospho-alpha-D-ribosyl)-3'-dephospho-CoA = holo-[citrate lyase ACP] + diphosphate. In terms of biological role, transfers 2-(5''-triphosphoribosyl)-3'-dephosphocoenzyme-A on a serine residue to the apo-acyl carrier protein (gamma chain) of the citrate lyase to yield holo-acyl carrier protein. The sequence is that of Apo-citrate lyase phosphoribosyl-dephospho-CoA transferase from Escherichia coli O6:K15:H31 (strain 536 / UPEC).